Reading from the N-terminus, the 257-residue chain is MNPLIIKLGGVLLDSEEALERLFTALVAYRQEHQRPLVIVHGGGCLVDDLMKKLSLPVVKKNGLRVTPADQIDIITGALAGSANKTLLSWAKKHDINAVGLCLGDGGSTTVTQLDEALGFVGKAEAGSPALLNTLLSAGYLPVVSSIGITAQGDLMNVNADQAATALAQTLGADLILLSDVSGILDGKGQRIAEMTAEKAEQLIAQGIITDGMIVKVNAALDAARALGRPVDIASWRHAEQLPALFNGVAIGTRILA.

Substrate-binding positions include 43–44 (GG), arginine 65, and asparagine 157. ATP contacts are provided by residues 180–185 (DVSGIL) and 208–210 (IIT).

Belongs to the acetylglutamate kinase family. ArgB subfamily. As to quaternary structure, homodimer.

It is found in the cytoplasm. The catalysed reaction is N-acetyl-L-glutamate + ATP = N-acetyl-L-glutamyl 5-phosphate + ADP. It functions in the pathway amino-acid biosynthesis; L-arginine biosynthesis; N(2)-acetyl-L-ornithine from L-glutamate: step 2/4. Catalyzes the ATP-dependent phosphorylation of N-acetyl-L-glutamate. This chain is Acetylglutamate kinase, found in Pectobacterium carotovorum subsp. carotovorum (strain PC1).